A 426-amino-acid chain; its full sequence is tRNA(Ile)-lysidine synthase (426 aa).

An ATP-binding site is contributed by serine 27–serine 32.

Belongs to the tRNA(Ile)-lysidine synthase family.

It localises to the cytoplasm. The catalysed reaction is cytidine(34) in tRNA(Ile2) + L-lysine + ATP = lysidine(34) in tRNA(Ile2) + AMP + diphosphate + H(+). Functionally, ligates lysine onto the cytidine present at position 34 of the AUA codon-specific tRNA(Ile) that contains the anticodon CAU, in an ATP-dependent manner. Cytidine is converted to lysidine, thus changing the amino acid specificity of the tRNA from methionine to isoleucine. This Bacteroides thetaiotaomicron (strain ATCC 29148 / DSM 2079 / JCM 5827 / CCUG 10774 / NCTC 10582 / VPI-5482 / E50) protein is tRNA(Ile)-lysidine synthase.